The primary structure comprises 527 residues: MKDKVKAEISKVLEREFVLEKPKDKNLAHYATPLFSLAKELRKSPAMIASEFADKFSDSKIVEASAVNGYLNFKLKSEFLDEISKQILLDSENFAKEDAKKDSYLIEYISANPTGPLHIGHVRGAVYGDTLARLGKRLGYAISTEYYINDAGNQIDLLGTSISLAAKEQLFNESVVYPEKYYRGDYILDIAKLANEKFGKEIFYDESRNLELAEFGKDIVLEIIKKDLADVGIFIESWASEKALYDGLEPTINKLKRSNQMYEKEGATYIASTTLGDDNDRVVVRNDGRPTYLAGDIIYHNAKFEKNFDHYINIWGADHHGYIARLKAAINFLGYDENRLEVILMQMVSLLKEGKPYKMSKRAGNAVLMSDIASEIGAEALRFIFISKANTSSLEFDVDELKKEDSSNPIFYINYAHARINQIFAKAGKSVSDVINADFECLDENSKNLLFEALILPEILEDAFASRQLQKIPDYLKSLAASFHKFYNENRVVGNENEDSLLKVFAVVAVSIKTAFNIMGITAKDRM.

A 'HIGH' region motif is present at residues 111–121 (ANPTGPLHIGH).

Belongs to the class-I aminoacyl-tRNA synthetase family. In terms of assembly, monomer.

Its subcellular location is the cytoplasm. It carries out the reaction tRNA(Arg) + L-arginine + ATP = L-arginyl-tRNA(Arg) + AMP + diphosphate. This chain is Arginine--tRNA ligase, found in Campylobacter concisus (strain 13826).